A 239-amino-acid polypeptide reads, in one-letter code: Protein LIFEGUARD 2 (239 aa).

Transmembrane regions (helical) follow at residues 41 to 61 (LLVT…SVFF), 66 to 86 (AGFA…CPLY), 96 to 116 (YLLL…TCAF), 121 to 141 (VILE…LYTF), 156 to 176 (FLFG…LFPL), 179 to 199 (ISVM…IVYD), and 213 to 233 (IWAA…LLTL).

This sequence belongs to the BI1 family. Expressed in seedlings, roots, leaves, inflorescences and flowers.

Its subcellular location is the membrane. Functionally, regulates the brassinosteroid (BR) signaling pathway that mediates cell elongation and organ morphogenesis. (Microbial infection) Facilitates the development of the powdery mildew fungus E.cruciferarum. In terms of biological role, (Microbial infection) May prevent cell death upon A.alternata f.sp. lycopersici (AAL) toxin treatment. The protein is Protein LIFEGUARD 2 of Arabidopsis thaliana (Mouse-ear cress).